The sequence spans 396 residues: Probable sugar efflux transporter (396 aa).

Transmembrane regions (helical) follow at residues 15 to 35 (VVTL…PVGL), 50 to 70 (VGIM…PFML), 81 to 101 (LICL…SWSF), 103 to 123 (VLVI…SITA), 136 to 156 (AQAL…GLPL), 170 to 190 (FFAI…LLPL), 209 to 229 (PALM…YTAY), 246 to 266 (FATA…VIFG), 275 to 295 (ALVS…LPAA), 299 to 319 (IHLG…GLGM), 333 to 353 (VAMA…ALVG), and 364 to 384 (MIGY…IIIF).

It belongs to the major facilitator superfamily. SotB (TC 2.A.1.2) family.

The protein resides in the cell inner membrane. Functionally, involved in the efflux of sugars. The physiological role may be the reduction of the intracellular concentration of toxic sugars or sugar metabolites. This is Probable sugar efflux transporter from Escherichia coli O17:K52:H18 (strain UMN026 / ExPEC).